Here is a 381-residue protein sequence, read N- to C-terminus: Putative 2-heptyl-3-hydroxy-4(1H)-quinolone synthase AqdB1 (381 aa).

Belongs to the 3-hydroxybenzoate 6-hydroxylase family.

It catalyses the reaction 2-heptyl-4(1H)-quinolone + NADH + O2 + H(+) = 2-heptyl-3-hydroxy-4(1H)-quinolone + NAD(+) + H2O. Could be involved in the degradation of the Pseudomonas aeruginosa quorum sensing signal molecule HHQ (2-heptyl-4-quinolone) to anthranilic acid. May catalyze the hydroxylation of HHQ to PQS (2-heptyl-3-hydroxy-4-quinolone). This Rhodococcus erythropolis (Arthrobacter picolinophilus) protein is Putative 2-heptyl-3-hydroxy-4(1H)-quinolone synthase AqdB1.